A 412-amino-acid chain; its full sequence is Arginine biosynthesis bifunctional protein ArgJ (412 aa).

Thr158, Lys184, Thr195, Glu284, Asn407, and Ser412 together coordinate substrate. Catalysis depends on Thr195, which acts as the Nucleophile.

The protein belongs to the ArgJ family. As to quaternary structure, heterotetramer of two alpha and two beta chains.

Its subcellular location is the cytoplasm. It catalyses the reaction N(2)-acetyl-L-ornithine + L-glutamate = N-acetyl-L-glutamate + L-ornithine. The catalysed reaction is L-glutamate + acetyl-CoA = N-acetyl-L-glutamate + CoA + H(+). It participates in amino-acid biosynthesis; L-arginine biosynthesis; L-ornithine and N-acetyl-L-glutamate from L-glutamate and N(2)-acetyl-L-ornithine (cyclic): step 1/1. Its pathway is amino-acid biosynthesis; L-arginine biosynthesis; N(2)-acetyl-L-ornithine from L-glutamate: step 1/4. Catalyzes two activities which are involved in the cyclic version of arginine biosynthesis: the synthesis of N-acetylglutamate from glutamate and acetyl-CoA as the acetyl donor, and of ornithine by transacetylation between N(2)-acetylornithine and glutamate. This is Arginine biosynthesis bifunctional protein ArgJ from Bartonella quintana (strain Toulouse) (Rochalimaea quintana).